The sequence spans 976 residues: Vacuolar membrane protease (976 aa).

At 1-15 (MKLKSVFRSVLKYRK) the chain is on the cytoplasmic side. A helical transmembrane segment spans residues 16–36 (TNLSLLLLITYSIITLLYIFD). At 37–359 (HERYKLNLPK…KFFVISAKTL (323 aa)) the chain is on the vacuolar side. Residues asparagine 96 and asparagine 121 are each glycosylated (N-linked (GlcNAc...) asparagine). Residues histidine 156 and aspartate 168 each coordinate Zn(2+). Asparagine 189 is a glycosylation site (N-linked (GlcNAc...) asparagine). Catalysis depends on glutamate 200, which acts as the Proton acceptor. Residue glutamate 201 participates in Zn(2+) binding. Asparagine 212 and asparagine 217 each carry an N-linked (GlcNAc...) asparagine glycan. Residues glutamate 226 and histidine 300 each coordinate Zn(2+). A helical membrane pass occupies residues 360 to 380 (FYWNCIFLLVSPVVAIGLYLI). Over 381 to 392 (SRDRMTWKSHSW) the chain is Cytoplasmic. Residues 393-412 (LSWTRFPLSLAAGIIVQKLF) form a helical membrane-spanning segment. Residues 413-428 (SNDIIRSNPLTFSRNY) lie on the Vacuolar side of the membrane. Residues 429–449 (FWPISAFFTQVIFTSYVLINC) form a helical membrane-spanning segment. At 450-461 (SNFFFPCADMKS) the chain is on the cytoplasmic side. A helical membrane pass occupies residues 462–482 (LSIIELFIILWTILLFTSKLL). Residues 483–496 (YSSDYRYTGLYPLS) lie on the Vacuolar side of the membrane. A helical membrane pass occupies residues 497-517 (IFFLLSTIAAILRLLALALGM). Residues 518–627 (RTRKRLGREC…NSLKLEYTDY (110 aa)) are Cytoplasmic-facing. Positions 528–610 (RDHHSNYSSH…PLLKGSNSME (83 aa)) are disordered. The segment covering 549 to 558 (NLEQPQDQFT) has biased composition (polar residues). Residues 559 to 570 (SSQDDQASIQDD) show a composition bias toward low complexity. Residues 582-601 (NVDEDHGMDSSSQQHDERVP) show a composition bias toward basic and acidic residues. Residues 628-648 (AWIIQFLLIVPIPSFILFNSV) traverse the membrane as a helical segment. Over 649–668 (DVIMDALNHTVQEGSKATFD) the chain is Vacuolar. Residue asparagine 656 is glycosylated (N-linked (GlcNAc...) asparagine). A helical transmembrane segment spans residues 669-689 (VLRFGMVGSILMALPILPFFY). Residues 690-692 (KVN) are Cytoplasmic-facing. Residues 693–713 (YITISLTALLFLISASKTLLV) traverse the membrane as a helical segment. Residues 714–976 (HPFTNSNPLK…LVIVKDAIIL (263 aa)) lie on the Vacuolar side of the membrane. 5 N-linked (GlcNAc...) asparagine glycosylation sites follow: asparagine 768, asparagine 796, asparagine 811, asparagine 866, and asparagine 937.

The protein belongs to the peptidase M28 family. Requires Zn(2+) as cofactor.

It localises to the vacuole membrane. Its function is as follows. May be involved in vacuolar sorting and osmoregulation. This Saccharomyces cerevisiae (strain Lalvin EC1118 / Prise de mousse) (Baker's yeast) protein is Vacuolar membrane protease.